We begin with the raw amino-acid sequence, 443 residues long: Putative F-box/FBD/LRR-repeat protein At3g49030 (443 aa).

The F-box domain occupies 20–68; the sequence is EDRISELPEDLLLQILSDIPTENVIATSVLSKRWRSLWKMVPNLTFDFT. 6 LRR repeats span residues 74-100, 152-179, 180-205, 218-252, 272-297, and 320-345; these read HQTF…QLNF, ILEI…RLYE, VHFK…SVHR, VPSL…NIVG, ISDV…SLES, and KERE…KLTG. The 52-residue stretch at 357 to 408 folds into the FBD domain; the sequence is NWNPPKCVPECLLFHLEKFLWTGYEWQRGDEKEVATYILENARLLKKATFST.

In Arabidopsis thaliana (Mouse-ear cress), this protein is Putative F-box/FBD/LRR-repeat protein At3g49030.